Here is a 427-residue protein sequence, read N- to C-terminus: Glutamate-1-semialdehyde 2,1-aminomutase (427 aa).

Lys265 carries the N6-(pyridoxal phosphate)lysine modification.

Belongs to the class-III pyridoxal-phosphate-dependent aminotransferase family. HemL subfamily. Homodimer. The cofactor is pyridoxal 5'-phosphate.

The protein resides in the cytoplasm. It carries out the reaction (S)-4-amino-5-oxopentanoate = 5-aminolevulinate. It functions in the pathway porphyrin-containing compound metabolism; protoporphyrin-IX biosynthesis; 5-aminolevulinate from L-glutamyl-tRNA(Glu): step 2/2. The protein is Glutamate-1-semialdehyde 2,1-aminomutase of Teredinibacter turnerae (strain ATCC 39867 / T7901).